The primary structure comprises 98 residues: NADH-ubiquinone oxidoreductase chain 4L (98 aa).

A run of 3 helical transmembrane segments spans residues 1–21, 26–46, and 56–76; these read MSPLHFSFYSAFTFSSLGLAF, LISALLCLESMMLSMFIPLSI, and FALVPILMLAFSACEAGTGLA.

It belongs to the complex I subunit 4L family. As to quaternary structure, core subunit of respiratory chain NADH dehydrogenase (Complex I) which is composed of 45 different subunits.

The protein localises to the mitochondrion inner membrane. The catalysed reaction is a ubiquinone + NADH + 5 H(+)(in) = a ubiquinol + NAD(+) + 4 H(+)(out). Its function is as follows. Core subunit of the mitochondrial membrane respiratory chain NADH dehydrogenase (Complex I) which catalyzes electron transfer from NADH through the respiratory chain, using ubiquinone as an electron acceptor. Part of the enzyme membrane arm which is embedded in the lipid bilayer and involved in proton translocation. This Gallus gallus (Chicken) protein is NADH-ubiquinone oxidoreductase chain 4L (MT-ND4L).